Reading from the N-terminus, the 248-residue chain is Phycocyanobilin:ferredoxin oxidoreductase (248 aa).

Belongs to the HY2 family.

The enzyme catalyses (2R,3Z)-phycocyanobilin + 4 oxidized [2Fe-2S]-[ferredoxin] = biliverdin IXalpha + 4 reduced [2Fe-2S]-[ferredoxin] + 4 H(+). Its function is as follows. Catalyzes the four-electron reduction of biliverdin IX-alpha (2-electron reduction at both the A and D rings); the reaction proceeds via an isolatable 2-electron intermediate, 181,182-dihydrobiliverdin. The sequence is that of Phycocyanobilin:ferredoxin oxidoreductase (pcyA) from Synechococcus elongatus (strain ATCC 33912 / PCC 7942 / FACHB-805) (Anacystis nidulans R2).